The primary structure comprises 1347 residues: Protocadherin-11 X-linked (1347 aa).

The signal sequence occupies residues 1-23 (MDLLSGTYIFAVLLACVVFHSGA). Over 24-812 (QEKNYTIREE…VSSPTNDYVK (789 aa)) the chain is Extracellular. 7 Cadherin domains span residues 26-139 (KNYT…APLF), 140-249 (PATV…HPVF), 250-355 (KETE…VPSI), 362-466 (NPVN…APVF), 467-570 (TQSF…SPVF), 571-673 (THNE…KPVF), and 677-795 (PSNY…APVT). Residues N27, N48, and N54 are each glycosylated (N-linked (GlcNAc...) asparagine). An N-linked (GlcNAc...) asparagine glycan is attached at N344. The N-linked (GlcNAc...) asparagine glycan is linked to N553. A glycan (N-linked (GlcNAc...) asparagine) is linked at N773. Residues 813-833 (ILVAAVAGTITVVVVIFITAV) traverse the membrane as a helical segment. Residues 834–1347 (VRCRQAPHLK…DSPIMEEHPL (514 aa)) lie on the Cytoplasmic side of the membrane. Disordered stretches follow at residues 1057 to 1091 (LPEGSQESSSDGGLGDHDAGSLTSTSHGLPLGYPQ), 1097 to 1116 (RATPSNRTEGDGNSDPESTF), and 1326 to 1347 (FTPRQQARPSRGDSPIMEEHPL).

It localises to the cell membrane. Its function is as follows. Potential calcium-dependent cell-adhesion protein. The sequence is that of Protocadherin-11 X-linked (PCDH11X) from Gorilla gorilla gorilla (Western lowland gorilla).